Reading from the N-terminus, the 144-residue chain is Large ribosomal subunit protein uL11 (144 aa).

Belongs to the universal ribosomal protein uL11 family. As to quaternary structure, part of the ribosomal stalk of the 50S ribosomal subunit. Interacts with L10 and the large rRNA to form the base of the stalk. L10 forms an elongated spine to which L12 dimers bind in a sequential fashion forming a multimeric L10(L12)X complex. In terms of processing, one or more lysine residues are methylated.

Its function is as follows. Forms part of the ribosomal stalk which helps the ribosome interact with GTP-bound translation factors. This chain is Large ribosomal subunit protein uL11, found in Neisseria gonorrhoeae (strain ATCC 700825 / FA 1090).